A 78-amino-acid chain; its full sequence is Probable [Fe-S]-dependent transcriptional repressor (78 aa).

4 residues coordinate iron-sulfur cluster: cysteine 56, cysteine 61, cysteine 64, and cysteine 70.

This sequence belongs to the FeoC family.

In terms of biological role, may function as a transcriptional regulator that controls feoABC expression. In Escherichia coli O7:K1 (strain IAI39 / ExPEC), this protein is Probable [Fe-S]-dependent transcriptional repressor.